Reading from the N-terminus, the 419-residue chain is Carboxypeptidase A1 (419 aa).

Positions 1–16 are cleaved as a signal peptide; sequence MKRLLVLSVLLAAVFG. The propeptide at 17–110 is activation peptide; the sequence is NENFVGHQVL…KQQMSAFQAR (94 aa). A Peptidase M14 domain is found at 121–414; it reads TYHTLDEIYE…LALLTIMDHT (294 aa). Zn(2+)-binding residues include H179 and E182. Residues 179–182, R237, and 254–255 each bind substrate; these read HSRE and NR. A disulfide bridge connects residues C248 and C271. H306 is a Zn(2+) binding site. Substrate is bound by residues 307–308 and Y358; that span reads SY. The Proton donor/acceptor role is filled by E380.

This sequence belongs to the peptidase M14 family. As to quaternary structure, monomer. The cofactor is Zn(2+).

It localises to the secreted. It catalyses the reaction Release of a C-terminal amino acid, but little or no action with -Asp, -Glu, -Arg, -Lys or -Pro.. In terms of biological role, carboxypeptidase that catalyzes the release of a C-terminal amino acid, but has little or no action with -Asp, -Glu, -Arg, -Lys or -Pro. The protein is Carboxypeptidase A1 (Cpa1) of Mus musculus (Mouse).